The chain runs to 403 residues: Anti-sigma-I factor RsgI8 (403 aa).

At 1–59 the chain is on the cytoplasmic side; that stretch reads MTKQKGTILKLKNNLAIIMTSDCKIVSIKRQPGMYEGLEISFNKNEIINKKNKLAFYSR. The 48-residue stretch at 4–51 folds into the RsgI N-terminal anti-sigma domain; sequence QKGTILKLKNNLAIIMTSDCKIVSIKRQPGMYEGLEISFNKNEIINKK. Residues 60–80 form a helical membrane-spanning segment; it reads IAAGIAAIFIIMVISFNLFNN. Residues 81-403 lie on the Extracellular side of the membrane; the sequence is NDVYAYVAID…KAKNSIEKMP (323 aa). Basic and acidic residues-rich tracts occupy residues 254–314, 324–335, and 349–403; these read VHNV…EPAK, LPKDKTIPEEKT, and VEPK…EKMP. Residues 254–403 form a disordered region; the sequence is VHNVKKEEPK…KAKNSIEKMP (150 aa).

In terms of assembly, interacts (via RsgI N-terminal anti-sigma domain) with SigI8.

Its subcellular location is the cell membrane. Functionally, anti-sigma factor for SigI8. Negatively regulates SigI8 activity through direct interaction. This chain is Anti-sigma-I factor RsgI8, found in Acetivibrio thermocellus (strain ATCC 27405 / DSM 1237 / JCM 9322 / NBRC 103400 / NCIMB 10682 / NRRL B-4536 / VPI 7372) (Clostridium thermocellum).